Here is a 227-residue protein sequence, read N- to C-terminus: Exodeoxyribonuclease (227 aa).

It carries out the reaction Exonucleolytic cleavage in the 3'- to 5'-direction to yield nucleoside 5'-phosphates.. Functionally, 3'-5' exonuclease that preferentially uses ssDNA as substrate. Plays a role in group I intron homing. May play a role in the final step of host DNA degradation, by scavenging DNA into mononucleotides. This Escherichia coli (Bacteriophage T4) protein is Exodeoxyribonuclease (dexA).